Here is a 410-residue protein sequence, read N- to C-terminus: Putative competence-damage inducible protein (410 aa).

Belongs to the CinA family.

This Clostridium kluyveri (strain NBRC 12016) protein is Putative competence-damage inducible protein.